The chain runs to 483 residues: Serralysin (483 aa).

Residue histidine 184 participates in Zn(2+) binding. Glutamate 185 is an active-site residue. The Zn(2+) site is built by histidine 188 and histidine 194. The Ca(2+) site is built by arginine 263, aspartate 266, aspartate 295, glycine 297, glycine 298, aspartate 300, threonine 337, and glutamate 339. 2 Hemolysin-type calcium-binding repeats span residues 342 to 359 (IGGS…ENIL) and 360 to 377 (KGGA…ADQL).

Belongs to the peptidase M10B family. The cofactor is Zn(2+). Ca(2+) serves as cofactor.

The protein localises to the secreted. The catalysed reaction is Preferential cleavage of bonds with hydrophobic residues in P1'.. Inhibited by 8 mM 1,10-phenanthroline and 10 mM EDTA, but not by PMSF. Its function is as follows. Involved in the inhibition of insect antibacterial peptides. Reduces the antibacterial activity of G.mellonella hemolymph by 50%. Reduces the antibacterial activity of cecropin A by 80% and cecropin B by 75%. The sequence is that of Serralysin from Photorhabdus sp. (strain Az29).